Reading from the N-terminus, the 332-residue chain is Putative peptide import ATP-binding protein BMEII0206 (332 aa).

In terms of domain architecture, ABC transporter spans 11 to 261 (LEVSNLSVDF…PLHPYTEGLL (251 aa)). Residue 47 to 54 (GESGSGKS) participates in ATP binding.

It belongs to the ABC transporter superfamily. As to quaternary structure, the complex is composed of two ATP-binding proteins (BMEII0205 and BMEII0206), two transmembrane proteins (BMEII0207/BMEII0208 and BMEII0209) and a solute-binding protein (BMEII0210).

Its subcellular location is the cell inner membrane. Functionally, probably part of an ABC transporter complex that could be involved in peptide import. Probably responsible for energy coupling to the transport system. This chain is Putative peptide import ATP-binding protein BMEII0206, found in Brucella melitensis biotype 1 (strain ATCC 23456 / CCUG 17765 / NCTC 10094 / 16M).